A 508-amino-acid polypeptide reads, in one-letter code: MEEKKDPRYLDLVISRKNDLLYPLIFQEYIYTLVHDHNLFPTILLENLGYDKRFRFLIVKRLITQMYQQNHLSLSAANLKQNPYFLYNKVLYSQKISEGLSIIVEIPFSLQLETSFKNLELVRVQNLKSIHSIFPFLEDKFPYLNLVSDGLFSYPIHLEKLVQILRYWLKDPASLHFLRLFFHEYWNWSHPSFEKKNLISFEKRNLRLFVFLYNSYVYEYESILFFIRRQFFHLPSKPFRFFFERLYFYVKIENLTEVFSKGSPVTLELFKEPNIHYIRYQGKFFFAYKGMPLLMNKWKYYFVTLFQNHFDVWFQTDKIHINPLYKHSFHCVGYLLSLKWNPSVIRSQMLQNAFIIENTMKKMDILVPIILMIDSLSKMKFCNKIGHPVSKPTWTDLLDSDIIDRFVRLCNKISYFYSGSSKKKNLYQIHYILRFACLKPLARKPKSSVRAFFKKLGSSFLEELFLEXQISSLIFIRSSPRSSDRSNQSKVRFWYLDIISINEIINHE.

This sequence belongs to the intron maturase 2 family. MatK subfamily.

The protein resides in the plastid. It is found in the chloroplast. Its function is as follows. Usually encoded in the trnK tRNA gene intron. Probably assists in splicing its own and other chloroplast group II introns. This is Maturase K from Marathrum schiedeanum.